The chain runs to 626 residues: MSHTSEQGASRPVALMMGALGVVYGDIGTSPLYTLRACLTEFADLQPAHILGVLSILFWLLMVVVSFKYVLLILRADNQGEGGTLALLELAVRGRSGRLRTFFVVLGIFGAALFYGDSMITPAISVLSAIEGIGVVSHTLDPWIVPLALLVLLALFAIQSRGTGTVGKLFGPVMVVWFATLGVLGGWQVWQTPEVLVALNPIWALRFVFEFPVMSFLLLGAVVLALTGAEALYADMGHFGRPAIRRAWFSMVLPSLTLCYLGQGALLLRDPSAIRNPFFLMAPEWGLAALVGLATVATVVASQAVISGAFSVTRQAVQLGFWPRMQILHTSAVEKGQIYLPQVNALLLCAVLVLVITFRNSENLAAAYGFAVTGTMLMTSILAFAVLPRGSTGAKRLGWMLVLGVLLIIDVLLFSANIFKIHEGGWMPLLVGVVVFTLMMTWRRGRQLLADIQARDRQPLQEFMDQLESYPPARVPGTAVFMTLNNDNVPPALLHNLKHNKVLHDHVLFLSIRVADVPYIAEQDRFSVKRVSASSWQAVIHYGFKEDPDVPEALRLVAEAYPEIDLEPMRTSFFLSRQAVVAARRPAMSRWRRTVFSFMARNSTRSTKFFKIPPNRVVEMGMQIEL.

12 helical membrane-spanning segments follow: residues 13-33, 53-73, 102-122, 138-158, 169-189, 207-227, 248-268, 277-297, 338-358, 367-387, 399-419, and 421-441; these read VALMMGALGVVYGDIGTSPLY, VLSILFWLLMVVVSFKYVLLI, FFVVLGIFGAALFYGDSMITP, HTLDPWIVPLALLVLLALFAI, LFGPVMVVWFATLGVLGGWQV, FVFEFPVMSFLLLGAVVLALT, WFSMVLPSLTLCYLGQGALLL, PFFLMAPEWGLAALVGLATVA, IYLPQVNALLLCAVLVLVITF, AYGFAVTGTMLMTSILAFAVL, WMLVLGVLLIIDVLLFSANIF, and IHEGGWMPLLVGVVVFTLMMT.

This sequence belongs to the HAK/KUP transporter (TC 2.A.72) family.

Its subcellular location is the cell inner membrane. The catalysed reaction is K(+)(in) + H(+)(in) = K(+)(out) + H(+)(out). Transport of potassium into the cell. Likely operates as a K(+):H(+) symporter. The sequence is that of Probable potassium transport system protein Kup from Bordetella avium (strain 197N).